We begin with the raw amino-acid sequence, 345 residues long: S-adenosylmethionine:tRNA ribosyltransferase-isomerase (345 aa).

Belongs to the QueA family. As to quaternary structure, monomer.

It is found in the cytoplasm. The catalysed reaction is 7-aminomethyl-7-carbaguanosine(34) in tRNA + S-adenosyl-L-methionine = epoxyqueuosine(34) in tRNA + adenine + L-methionine + 2 H(+). It participates in tRNA modification; tRNA-queuosine biosynthesis. Its function is as follows. Transfers and isomerizes the ribose moiety from AdoMet to the 7-aminomethyl group of 7-deazaguanine (preQ1-tRNA) to give epoxyqueuosine (oQ-tRNA). This chain is S-adenosylmethionine:tRNA ribosyltransferase-isomerase, found in Helicobacter pylori (strain G27).